Consider the following 540-residue polypeptide: 2-isopropylmalate synthase (540 aa).

The Pyruvate carboxyltransferase domain maps to 8–269 (VLIFDTTLRD…YFNPFFGRAE (262 aa)). Positions 17, 208, 210, and 244 each coordinate Mn(2+). The tract at residues 408–540 (QLKLVQVSCG…ATPLDASPTL (133 aa)) is regulatory domain.

This sequence belongs to the alpha-IPM synthase/homocitrate synthase family. LeuA type 1 subfamily. As to quaternary structure, homodimer. It depends on Mn(2+) as a cofactor.

Its subcellular location is the cytoplasm. The catalysed reaction is 3-methyl-2-oxobutanoate + acetyl-CoA + H2O = (2S)-2-isopropylmalate + CoA + H(+). The protein operates within amino-acid biosynthesis; L-leucine biosynthesis; L-leucine from 3-methyl-2-oxobutanoate: step 1/4. Catalyzes the condensation of the acetyl group of acetyl-CoA with 3-methyl-2-oxobutanoate (2-ketoisovalerate) to form 3-carboxy-3-hydroxy-4-methylpentanoate (2-isopropylmalate). The polypeptide is 2-isopropylmalate synthase (Synechococcus sp. (strain WH7803)).